An 81-amino-acid polypeptide reads, in one-letter code: Kappa-theraphotoxin-Gr2c (81 aa).

The signal sequence occupies residues 1–19; it reads MKAFFVILGLALLCAYSFA. A propeptide spanning residues 20–50 is cleaved from the precursor; that stretch reads LEEQDQLSLRNDLLTVMFAENSELTPETEER. Disulfide bonds link Cys52/Cys66, Cys59/Cys71, and Cys65/Cys75.

This sequence belongs to the neurotoxin 30 (phrixotoxin) family. As to expression, expressed by the venom gland.

Its subcellular location is the secreted. Functionally, inhibits sodium channels Nav1.1/SCN1A (IC(50)=5.7 uM), Nav1.2/SCN2A (IC(50)=12 uM), Nav1.4/SCN4A (IC(50)=4 uM), Nav1.6/SCN8A (IC(50)=6.6 uM), Nav1.7/SCN9A (IC(50)=13.6-1030 nM), potassium channels Kv11.1/KCNH2 (IC(50)=4.7 uM), as well as high-voltage-gated calcium channels Cav1.2/CACNA1C (IC(50)= nM). Also blocks mechanosensitive ion channels (also named stretch-activated channels or SACs) and the hypotonic cell swelling induced calcium increase associated with the activation of such channels. It can thus be useful in treating cardiac ventricular disturbances. Also induces analgesia in mammals. The protein is Kappa-theraphotoxin-Gr2c of Grammostola rosea (Chilean rose tarantula).